The primary structure comprises 513 residues: Cytochrome P450 4d10 (513 aa).

Positions 317 and 457 each coordinate heme.

This sequence belongs to the cytochrome P450 family. Heme serves as cofactor.

The protein resides in the endoplasmic reticulum membrane. Its subcellular location is the microsome membrane. Its function is as follows. May play an important role in the maintenance of specific insect-host plant relationships. May be involved in xenobiotic metabolism. This chain is Cytochrome P450 4d10 (Cyp4d10), found in Drosophila mettleri (Fruit fly).